Reading from the N-terminus, the 80-residue chain is MSVFHDEVEIEDFEFDEEKDVYHYPCPCGDRFEIPREMLEMGEDVAQCPSCSLLIRVIYDPEDFVKLETISTSKPIAEPV.

In terms of domain architecture, DPH-type MB spans 4-60; that stretch reads FHDEVEIEDFEFDEEKDVYHYPCPCGDRFEIPREMLEMGEDVAQCPSCSLLIRVIYD. Fe cation contacts are provided by cysteine 26, cysteine 28, cysteine 48, and cysteine 51.

It belongs to the DPH3 family. Component of the 2-(3-amino-3-carboxypropyl)histidine synthase complex composed of dph-1, dph-2, dph-3 and a NADH-dependent reductase. Fe(2+) is required as a cofactor.

The enzyme catalyses [3Fe-4S](1+)-[protein] + Fe(2+)-[Dph3] = [3Fe-4S](0)-[protein] + Fe(3+)-[Dph3]. It carries out the reaction 2 [3Fe-4S](0)-[protein] + 2 Fe(2+)-[Dph3] + NADH = 2 [4Fe-4S](1+)-[protein] + 2 [Dph3] + NAD(+) + H(+). Its pathway is protein modification; peptidyl-diphthamide biosynthesis. Required for the first step of diphthamide biosynthesis, a post-translational modification of histidine which occurs in elongation factor 2. Dph-1 and dph-2 transfer a 3-amino-3-carboxypropyl (ACP) group from S-adenosyl-L-methionine (SAM) to a histidine residue, the reaction is assisted by a reduction system comprising dph-3 and a NADH-dependent reductase. Acts as an electron donor to reduce the Fe-S cluster in dph1-dph2 keeping the [4Fe-4S] clusters in the active and reduced state. Restores iron to dph-1-dph-2 iron-sulfur clusters which have degraded from [4Fe-4S] to [3Fe-4S] by donating an iron atom to reform [4Fe-4S] clusters, in a manner dependent on the presence of elongation factor 2 and SAM. Associates with the elongator complex and is required for tRNA Wobble base modifications mediated by the elongator complex. The elongator complex is required for multiple tRNA modifications, including mcm5U (5-methoxycarbonylmethyl uridine), mcm5s 2U (5-methoxycarbonylmethyl-2-thiouridine), and ncm5U (5-carbamoylmethyl uridine). In Caenorhabditis elegans, this protein is Diphthamide biosynthesis protein 3.